The following is a 925-amino-acid chain: Aspulvinone E synthetase melA (925 aa).

Residues 11-434 (ETAAARNGDG…GGRAKETIII (424 aa)) are adenylation (A) domain. Residues 564–644 (SPKNDFEKGL…ELAAALDNLY (81 aa)) enclose the Carrier domain. O-(pantetheine 4'-phosphoryl)serine is present on serine 601. A thioesterase (TE) domain region spans residues 663–923 (PLWLVHPGAG…KILRSALAER (261 aa)).

It belongs to the ATP-dependent AMP-binding enzyme family.

Its subcellular location is the cytoplasm. Functionally, nonribosomal peptide synthase; part of the gene cluster that mediates the biosynthesis of Asp-melanin, a pigment that confers resistance against UV light and hampers phagocytosis by soil amoeba. The nonribosomal peptide synthase melA converts 4-hydroxyphenylpyruvate (4-HPPA) to aspulvinone E. The tyrosinase tyrP then performs hydroxylations of both aromatic moieties of aspulvinone E. The product of tyrP is highly unstable, and, due to the high reactivity of methides and ortho-diquinones, the polymeric Asp-melanin forms spontaneously. This Aspergillus terreus protein is Aspulvinone E synthetase melA.